A 1051-amino-acid chain; its full sequence is Protein ALWAYS EARLY 2 (1051 aa).

Composition is skewed to basic residues over residues Met-1 to Asn-11 and Ser-27 to Leu-36. Residues Met-1–Ser-37 are disordered. The SANT domain maps to Lys-39–Pro-93. Disordered stretches follow at residues Glu-114–Pro-158, Ala-170–Phe-210, Thr-225–Thr-293, Ala-323–Ala-375, Ser-397–Ser-605, and Ser-948–Met-981. A compositionally biased stretch (basic and acidic residues) spans Gly-120–Arg-130. A compositionally biased stretch (basic residues) spans Lys-131 to Pro-140. The span at Glu-279–Thr-293 shows a compositional bias: basic and acidic residues. Acidic residues predominate over residues Ala-323–Gly-332. 2 stretches are compositionally biased toward basic and acidic residues: residues Ala-350 to Thr-372 and Leu-403 to Ser-417. Over residues Lys-560 to Pro-574 the composition is skewed to polar residues. Residues Leu-586–His-597 show a composition bias toward basic and acidic residues. A compositionally biased stretch (polar residues) spans Asn-967–Met-981.

In terms of assembly, interacts with SNL1 (via PAH3). Expressed ubiquitously in vegetative and reproductive tissues.

The protein localises to the nucleus. The protein is Protein ALWAYS EARLY 2 (ALY2) of Arabidopsis thaliana (Mouse-ear cress).